The primary structure comprises 347 residues: uncharacterized protein (347 aa).

This is an uncharacterized protein from Sinorhizobium fredii (strain NBRC 101917 / NGR234).